Consider the following 129-residue polypeptide: Follitropin subunit beta (129 aa).

A signal peptide spans 1–20; that stretch reads MKTVQFCFLFCCWKAICCNS. Cystine bridges form between cysteine 21–cysteine 69, cysteine 35–cysteine 84, cysteine 38–cysteine 122, cysteine 46–cysteine 100, cysteine 50–cysteine 102, and cysteine 105–cysteine 112. N-linked (GlcNAc...) asparagine glycans are attached at residues asparagine 25 and asparagine 42.

The protein belongs to the glycoprotein hormones subunit beta family. Heterodimer. The active follitropin is a heterodimer composed of an alpha chain/CGA shared with other hormones and a unique beta chain/FSHB shown here.

The protein localises to the secreted. Its function is as follows. Together with the alpha chain CGA constitutes follitropin, the follicle-stimulating hormone, and provides its biological specificity to the hormone heterodimer. Binds FSHR, a G protein-coupled receptor, on target cells to activate downstream signaling pathways. Follitropin is involved in follicle development and spermatogenesis in reproductive organs. This Aotus nancymaae (Ma's night monkey) protein is Follitropin subunit beta (FSHB).